A 516-amino-acid polypeptide reads, in one-letter code: GMP synthase [glutamine-hydrolyzing] (516 aa).

The Glutamine amidotransferase type-1 domain occupies 5–199 (PIVILDFGSQ…ARKICGITSK (195 aa)). Cys82 (nucleophile) is an active-site residue. Catalysis depends on residues His173 and Glu175. The GMPS ATP-PPase domain occupies 200–391 (WDMGHFAKEQ…LGLPREMVYR (192 aa)). Residue 227-233 (SGGVDSS) participates in ATP binding.

Homodimer.

The enzyme catalyses XMP + L-glutamine + ATP + H2O = GMP + L-glutamate + AMP + diphosphate + 2 H(+). Its pathway is purine metabolism; GMP biosynthesis; GMP from XMP (L-Gln route): step 1/1. Catalyzes the synthesis of GMP from XMP. The polypeptide is GMP synthase [glutamine-hydrolyzing] (Nitratiruptor sp. (strain SB155-2)).